Consider the following 375-residue polypeptide: Odorant receptor 10 (375 aa).

6 helical membrane passes run 32-52 (ISII…GHSW), 58-78 (VIIK…TLIL), 125-145 (NLAL…FTGV), 167-187 (IIYL…IPFT), 250-270 (YICF…LFLL), and 279-299 (IVIV…FYWH).

It belongs to the insect chemoreceptor superfamily. Heteromeric odorant receptor channel (TC 1.A.69) family. In terms of tissue distribution, expressed in female antenna, maxillary palp and proboscis. Expressed in female body. Expressed in male tissues.

Its subcellular location is the cell membrane. Its function is as follows. Odorant receptor which complexes with Orco, a coreceptor, to form odorant-sensing units, providing sensitive and prolonged odorant signaling and calcium permeability. Can sense indole, 1-octen-3-ol, 3-methyindole and an insect repellent DEET. This chain is Odorant receptor 10, found in Aedes albopictus (Asian tiger mosquito).